Here is a 72-residue protein sequence, read N- to C-terminus: Translation initiation factor IF-1 (72 aa).

The 72-residue stretch at 1 to 72 folds into the S1-like domain; the sequence is MAKEDNIEMQ…SKGRIVFRSR (72 aa).

Belongs to the IF-1 family. Component of the 30S ribosomal translation pre-initiation complex which assembles on the 30S ribosome in the order IF-2 and IF-3, IF-1 and N-formylmethionyl-tRNA(fMet); mRNA recruitment can occur at any time during PIC assembly.

The protein localises to the cytoplasm. One of the essential components for the initiation of protein synthesis. Stabilizes the binding of IF-2 and IF-3 on the 30S subunit to which N-formylmethionyl-tRNA(fMet) subsequently binds. Helps modulate mRNA selection, yielding the 30S pre-initiation complex (PIC). Upon addition of the 50S ribosomal subunit IF-1, IF-2 and IF-3 are released leaving the mature 70S translation initiation complex. The polypeptide is Translation initiation factor IF-1 (Shewanella loihica (strain ATCC BAA-1088 / PV-4)).